The chain runs to 83 residues: Small ribosomal subunit protein eS21 (83 aa).

This sequence belongs to the eukaryotic ribosomal protein eS21 family. In terms of assembly, component of the 40S small ribosomal subunit. Interacts with sta.

Its subcellular location is the cytoplasm. It localises to the cytosol. It is found in the rough endoplasmic reticulum. May be an associated component of the ribosome rather than a core structural subunit. May act as a translation initiation factor. Has a role in regulation of cell proliferation in the hematopoietic organs and the imaginal disks of larva. This is Small ribosomal subunit protein eS21 (RpS21) from Drosophila erecta (Fruit fly).